The chain runs to 586 residues: Merlin (586 aa).

S9 bears the Phosphoserine mark. The FERM domain occupies 18 to 307 (FTVRIVTMDA…GNHDLFMRRR (290 aa)). Residues 325 to 354 (KARKQMERQRLAREKQMREEAERSRDEPER) form a disordered region. A Phosphoserine; by PAK modification is found at S514. Residues 557–586 (LHSEHSDSGTSSKHNTIKKPQAQGRRPICI) form a disordered region.

As to quaternary structure, interacts with NHERF1, HGS and AGAP2. Interacts with SGSM3. Interacts (via FERM domain) with MPP1. Interacts with LAYN and WWC1. Interacts with the CUL4A-RBX1-DDB1-VprBP/DCAF1 E3 ubiquitin-protein ligase complex. The unphosphorylated form interacts (via FERM domain) with VPRBP/DCAF1. Interacts (via FERM domain) with NOP53; the interaction is direct. Interacts with SCHIP1; the interaction is direct. Ubiquitinated by the CUL4A-RBX1-DDB1-DCAF1/VprBP E3 ubiquitin-protein ligase complex for ubiquitination and subsequent proteasome-dependent degradation. Post-translationally, phosphorylation of Ser-514 inhibits nuclear localization by disrupting the intramolecular association of the FERM domain with the C-terminal tail. The dephosphorylation of Ser-514 favors the interaction with NOP53.

It is found in the cell membrane. It localises to the cell projection. The protein localises to the cytoplasm. The protein resides in the cytoskeleton. Its subcellular location is the nucleus. Probable regulator of the Hippo/SWH (Sav/Wts/Hpo) signaling pathway, a signaling pathway that plays a pivotal role in tumor suppression by restricting proliferation and promoting apoptosis. Along with WWC1 can synergistically induce the phosphorylation of LATS1 and LATS2 and can probably function in the regulation of the Hippo/SWH (Sav/Wts/Hpo) signaling pathway. May act as a membrane stabilizing protein. May inhibit PI3 kinase by binding to AGAP2 and impairing its stimulating activity. Suppresses cell proliferation and tumorigenesis by inhibiting the CUL4A-RBX1-DDB1-VprBP/DCAF1 E3 ubiquitin-protein ligase complex Plays a role in lens development and is required for complete fiber cell terminal differentiation, maintenance of cell polarity and separation of the lens vesicle from the corneal epithelium. This Rattus norvegicus (Rat) protein is Merlin (Nf2).